Consider the following 529-residue polypeptide: Probable serine carboxypeptidase ARB_06414 (529 aa).

The signal sequence occupies residues 1–19 (MRGLSYFVLALSAIDAAAA). Positions 171–191 (PTDDNPSRPVGTGFSQGKPSV) are disordered. S225 is an active-site residue. N-linked (GlcNAc...) asparagine glycosylation is found at N284 and N377. Residue D434 is part of the active site. 2 N-linked (GlcNAc...) asparagine glycosylation sites follow: N440 and N448. H503 is an active-site residue.

The protein belongs to the peptidase S10 family.

The protein resides in the secreted. In terms of biological role, removes acidic, neutral and basic amino acids as well as proline from the C-terminal position. The sequence is that of Probable serine carboxypeptidase ARB_06414 from Arthroderma benhamiae (strain ATCC MYA-4681 / CBS 112371) (Trichophyton mentagrophytes).